Here is a 695-residue protein sequence, read N- to C-terminus: Nucleoprotein (695 aa).

Coiled-coil stretches lie at residues 316-341 (VNVGEQYQQLREAAHDAEIKLQRRHE) and 372-399 (QTLAVLSQKREKLARLAAEIENNIVEDQ). 3 disordered regions span residues 423 to 458 (VQARPINRPTALPPPVDNKIEHESTEDSSSSSSFVD), 483 to 515 (TSREFQGIPAPPRQSQDLNNSQGKQEDESTNPI), and 527 to 612 (PVQE…DTRA). 2 stretches are compositionally biased toward polar residues: residues 495 to 505 (RQSQDLNNSQG) and 537 to 552 (TTDSQESIDQPGSDNE). The short motif at 603–606 (PSAP) is the PTAP/PSAP motif element.

It belongs to the filoviruses nucleoprotein family. As to quaternary structure, homooligomer. Homomultimerizes to form the nucleocapsid. Binds to viral genomic RNA. Interacts with VP35 and VP30 to form the nucleocapsid. Also interacts with VP24 and VP40. Post-translationally, phosphorylated.

The protein localises to the virion. It localises to the host cytoplasm. Functionally, encapsidates the genome, protecting it from nucleases. The encapsidated genomic RNA is termed the nucleocapsid and serves as template for transcription and replication. During replication, encapsidation by NP is coupled to RNA synthesis and all replicative products are resistant to nucleases. The polypeptide is Nucleoprotein (NP) (Chlorocebus aethiops (Green monkey)).